Consider the following 385-residue polypeptide: Alkanesulfonate monooxygenase (385 aa).

Belongs to the SsuD family.

It catalyses the reaction an alkanesulfonate + FMNH2 + O2 = an aldehyde + FMN + sulfite + H2O + 2 H(+). Its function is as follows. Catalyzes the desulfonation of aliphatic sulfonates. The sequence is that of Alkanesulfonate monooxygenase from Burkholderia pseudomallei (strain 1710b).